We begin with the raw amino-acid sequence, 932 residues long: MAAPQSRPRRGELILLCALLGTLWEIGRGQIRYSVPEETDKGSFVGNISKDLGLDPRKLAKHGVRIVSRGRTQLFALNPRSGSLITAGRIDREELCAQSPRCLININTLVEDKGKLFGVEIEIIDINDNNPKFQVEDLEVKINEIAVPGARYPLPEAVDPDVGVNSLQSYQLSPNHHFSLDVQTGDNGAINPELVLERALDREEEAAHHLVLTASDGGKPPRSSTVRIHVTVLDTNDNAPVFPHPIYRVKVLENMPPGTRLLTVTASDPDEGINGKVAYKFRKINEKQTPLFQLNENTGEISIAKSLDYEECSFYEMEIQAEDVGALLGRTKLLISVEDVNDNRPEVIITSLFSPVLENSLPGTVIAFLSVHDQDSGKNGQVVCYTRDNLPFKLEKSIGNYYRLVTRKYLDRENVSIYNITVMASDLGTPPLSTETQIALHVADINDNPPTFPHASYSAYILENNLRGASIFSLTAHDPDSQENAQVTYSVTEDTLQGAPLSSYISINSDTGVLYALQSFDYEQIRDLQLLVTASDSGDPPLSSNMSLSLFVLDQNDNAPEILYPALPTDGSTGVELAPRSAERGYLVTKVVAVDRDSGQNAWLSYRLLKASEPGLFSVGLHTGEVRTARALLDRDALKQSLVVAVQDHGQPPLSATVTLTVAVADSIPEVLTELGSLKPSVDPNDSSLTLYLVVAVAAISCVFLAFVAVLLGLRLRRWHKSRLLQDSGGRLVGVPASHFVGVEEVQAFLQTYSQEVSLTADSRKSHLIFPQPNYADMLISQEGCEKNDSLLTSVDFHEYKNEADHGQQAPPNTDWRFSQAQRPGTSGSQNGDDTGTWPNNQFDTEMLQAMILASASEAADGSSTLGGGAGTMGLSARYGPQFTLQHVPDYRQNVYIPGSNATLTNAAGKRDGKAPAGGNGNKKKSGKKEKK.

Positions 1 to 29 (MAAPQSRPRRGELILLCALLGTLWEIGRG) are cleaved as a signal peptide. 6 Cadherin domains span residues 30 to 133 (QIRY…NPKF), 134 to 242 (QVED…APVF), 243 to 347 (PHPI…RPEV), 348 to 452 (IITS…PPTF), 453 to 562 (PHAS…APEI), and 570 to 682 (DGST…KPSV). Topologically, residues 30-692 (QIRYSVPEET…DPNDSSLTLY (663 aa)) are extracellular. A glycan (N-linked (GlcNAc...) asparagine) is linked at Asn-47. Asn-414, Asn-419, and Asn-545 each carry an N-linked (GlcNAc...) asparagine glycan. A glycan (N-linked (GlcNAc...) asparagine) is linked at Asn-685. Residues 693-713 (LVVAVAAISCVFLAFVAVLLG) traverse the membrane as a helical segment. Residues 714-932 (LRLRRWHKSR…KKKSGKKEKK (219 aa)) are Cytoplasmic-facing. 2 disordered regions span residues 804–841 (ADHG…WPNN) and 902–932 (ATLT…KEKK). Residues 810–841 (APPNTDWRFSQAQRPGTSGSQNGDDTGTWPNN) are compositionally biased toward polar residues. The span at 922-932 (NKKKSGKKEKK) shows a compositional bias: basic residues.

It localises to the cell membrane. Functionally, potential calcium-dependent cell-adhesion protein. May be involved in the establishment and maintenance of specific neuronal connections in the brain. This chain is Protocadherin gamma-A8 (PCDHGA8), found in Homo sapiens (Human).